We begin with the raw amino-acid sequence, 163 residues long: Globin CTT-Z (163 aa).

The signal sequence occupies residues 1–16 (MKFFAVLALCIVGAIA). Positions 18–162 (PLTSDEAALV…VYTAVFQIVT (145 aa)) constitute a Globin domain. The heme b site is built by H76 and H111.

The protein belongs to the globin family.

This chain is Globin CTT-Z (CTT-Z), found in Chironomus thummi piger (Midge).